The primary structure comprises 429 residues: Enolase (429 aa).

Position 163 (Gln163) interacts with (2R)-2-phosphoglycerate. Glu205 serves as the catalytic Proton donor. Mg(2+) is bound by residues Asp242, Glu287, and Asp314. Residues Lys339, Arg368, Ser369, and Lys390 each coordinate (2R)-2-phosphoglycerate. Residue Lys339 is the Proton acceptor of the active site.

It belongs to the enolase family. Requires Mg(2+) as cofactor.

The protein localises to the cytoplasm. The protein resides in the secreted. Its subcellular location is the cell surface. The catalysed reaction is (2R)-2-phosphoglycerate = phosphoenolpyruvate + H2O. Its pathway is carbohydrate degradation; glycolysis; pyruvate from D-glyceraldehyde 3-phosphate: step 4/5. In terms of biological role, catalyzes the reversible conversion of 2-phosphoglycerate (2-PG) into phosphoenolpyruvate (PEP). It is essential for the degradation of carbohydrates via glycolysis. The polypeptide is Enolase (Anaeromyxobacter dehalogenans (strain 2CP-1 / ATCC BAA-258)).